The sequence spans 521 residues: MAP kinase-activated protein kinase mak-1 (521 aa).

The segment covering 1–12 (MMFEYEEDEDPM) has biased composition (acidic residues). Residues 1–36 (MMFEYEEDEDPMEQQKHEEFKHHSTDHSGSPQENPF) are disordered. Residues 13 to 26 (EQQKHEEFKHHSTD) show a composition bias toward basic and acidic residues. Residues 144–405 (TISAEIIGIG…IHELMATPLV (262 aa)) enclose the Protein kinase domain. Residues 150–158 (IGIGESGKV) and lysine 173 contribute to the ATP site. Aspartate 266 acts as the Proton acceptor in catalysis.

It belongs to the protein kinase superfamily. CAMK Ser/Thr protein kinase family. As to quaternary structure, may interact (via protein kinase domain) with unc-22 (via protein kinase and CRD domains). The cofactor is Mg(2+). In terms of processing, autophosphorylated in vitro. Expressed in body wall muscles (at protein level). Expressed in intestine.

It is found in the cytoplasm. Its subcellular location is the myofibril. The protein resides in the sarcomere. It localises to the a band. The catalysed reaction is L-seryl-[protein] + ATP = O-phospho-L-seryl-[protein] + ADP + H(+). It carries out the reaction L-threonyl-[protein] + ATP = O-phospho-L-threonyl-[protein] + ADP + H(+). Serine/threonine-protein kinase which may play a role in body wall muscle contraction. May phosphorylate unc-22/twitchin. This Caenorhabditis elegans protein is MAP kinase-activated protein kinase mak-1.